The sequence spans 379 residues: Probable pectin lyase A (379 aa).

Positions 1–19 are cleaved as a signal peptide; sequence MKFALLSGVAAGLLPVVSA. 2 cysteine pairs are disulfide-bonded: Cys-82/Cys-101 and Cys-91/Cys-225. Residue Arg-255 is part of the active site. Cys-322 and Cys-330 are joined by a disulfide.

It belongs to the polysaccharide lyase 1 family.

Its subcellular location is the secreted. It catalyses the reaction Eliminative cleavage of (1-&gt;4)-alpha-D-galacturonan methyl ester to give oligosaccharides with 4-deoxy-6-O-methyl-alpha-D-galact-4-enuronosyl groups at their non-reducing ends.. In terms of biological role, pectinolytic enzymes consist of four classes of enzymes: pectin lyase, polygalacturonase, pectin methylesterase and rhamnogalacturonase. Among pectinolytic enzymes, pectin lyase is the most important in depolymerization of pectin, since it cleaves internal glycosidic bonds of highly methylated pectins. The polypeptide is Probable pectin lyase A (pelA) (Aspergillus oryzae (strain ATCC 42149 / RIB 40) (Yellow koji mold)).